We begin with the raw amino-acid sequence, 468 residues long: ATP synthase subunit beta (468 aa).

Position 155–162 (155–162) interacts with ATP; that stretch reads GGAGVGKT.

This sequence belongs to the ATPase alpha/beta chains family. As to quaternary structure, F-type ATPases have 2 components, CF(1) - the catalytic core - and CF(0) - the membrane proton channel. CF(1) has five subunits: alpha(3), beta(3), gamma(1), delta(1), epsilon(1). CF(0) has three main subunits: a(1), b(2) and c(9-12). The alpha and beta chains form an alternating ring which encloses part of the gamma chain. CF(1) is attached to CF(0) by a central stalk formed by the gamma and epsilon chains, while a peripheral stalk is formed by the delta and b chains.

Its subcellular location is the cell membrane. The catalysed reaction is ATP + H2O + 4 H(+)(in) = ADP + phosphate + 5 H(+)(out). Produces ATP from ADP in the presence of a proton gradient across the membrane. The catalytic sites are hosted primarily by the beta subunits. The sequence is that of ATP synthase subunit beta from Streptococcus gordonii (strain Challis / ATCC 35105 / BCRC 15272 / CH1 / DL1 / V288).